The chain runs to 353 residues: Heterogeneous nuclear ribonucleoproteins A2/B1 (353 aa).

Met-1 is modified (N-acetylmethionine). The residue at position 4 (Thr-4) is a Phosphothreonine. Residues 9–15 (PLERKKR) carry the Nuclear localization signal motif. 2 RRM domains span residues 21 to 104 (RKLF…ESGK) and 112 to 191 (KKLF…LSRQ). A Glycyl lysine isopeptide (Lys-Gly) (interchain with G-Cter in SUMO2) cross-link involves residue Lys-22. Ser-29 carries the post-translational modification Phosphoserine. Residue Arg-38 is modified to Omega-N-methylarginine. Ser-85 carries the phosphoserine modification. An N6,N6-dimethyllysine; alternate modification is found at Lys-104. A Glycyl lysine isopeptide (Lys-Gly) (interchain with G-Cter in SUMO2); alternate cross-link involves residue Lys-104. Residues Lys-112, Lys-120, and Lys-137 each participate in a glycyl lysine isopeptide (Lys-Gly) (interchain with G-Cter in SUMO2) cross-link. Thr-140 carries the phosphothreonine modification. Ser-149 carries the phosphoserine modification. Residue Lys-152 forms a Glycyl lysine isopeptide (Lys-Gly) (interchain with G-Cter in SUMO2) linkage. Position 159 is a phosphothreonine (Thr-159). Glycyl lysine isopeptide (Lys-Gly) (interchain with G-Cter in SUMO2); alternate cross-links involve residues Lys-168 and Lys-173. An N6-acetyllysine; alternate mark is found at Lys-168 and Lys-173. Position 176 is a phosphothreonine (Thr-176). Lys-186 participates in a covalent cross-link: Glycyl lysine isopeptide (Lys-Gly) (interchain with G-Cter in SUMO2). Residues Ser-189 and Ser-201 each carry the phosphoserine modification. Residues 193–353 (MQEVQSSRSG…SGGYGGRSRY (161 aa)) are disordered. Residues 202–223 (GRGGNFGFGDSRGGGGNFGPGP) show a composition bias toward gly residues. Residue Arg-203 is modified to Asymmetric dimethylarginine; alternate. Arg-203 is modified (dimethylated arginine; alternate). Position 203 is an omega-N-methylarginine; alternate (Arg-203). Ser-212 carries the post-translational modification Phosphoserine. An Asymmetric dimethylarginine; alternate modification is found at Arg-213. Arg-213 carries the post-translational modification Dimethylated arginine; alternate. Arg-213 bears the Omega-N-methylarginine; alternate mark. At Ser-225 the chain carries Phosphoserine. Residue Arg-228 is modified to Omega-N-methylarginine. 2 positions are modified to phosphoserine: Ser-231 and Ser-236. The residue at position 238 (Arg-238) is an Omega-N-methylarginine. Position 259 is a phosphoserine (Ser-259). Arg-266 carries the asymmetric dimethylarginine; alternate modification. Position 266 is an omega-N-methylarginine; alternate (Arg-266). The segment at 308–347 (QQPSNYGPMKSGNFGGSRNMGGPYGGGNYGPGGSGGSGGY) is nuclear targeting sequence. Gly residues predominate over residues 320-353 (NFGGSRNMGGPYGGGNYGPGGSGGSGGYGGRSRY). At Ser-324 the chain carries Phosphoserine. Arg-325 is modified (omega-N-methylarginine). Tyr-331 carries the phosphotyrosine modification. Ser-341 and Ser-344 each carry phosphoserine. Tyr-347 is subject to Phosphotyrosine. Omega-N-methylarginine is present on Arg-350.

As to quaternary structure, identified in the spliceosome C complex. Identified in a IGF2BP1-dependent mRNP granule complex containing untranslated mRNAs. Interacts with IGF2BP1. Interacts with C9orf72. Interacts with DGCR8. Interacts with TARDBP. Interacts with CKAP5. Interacts with PPIA/CYPA. Interacts (via C-terminus) with FAM76B; the interaction results in retention of HNRNPA2B1 in the nucleus and inhibition of the NF-kappa-B-mediated inflammatory pathway. Interacts with NF-kappa-B inhibitors NFKBIA and NFKBIE; the interaction may be mediated by the RRM2 domain of HNRNPA2B1, and HNRNPA2B1 may interact simultaneously with FAM76B and either NFKBIA or NFKBIE to form a complex. Post-translationally, sumoylated in exosomes, promoting miRNAs-binding. Asymmetric dimethylation at Arg-266 constitutes the major methylation site. According to a report, methylation affects subcellular location and promotes nuclear localization. According to another report, methylation at Arg-266 does not influence nucleocytoplasmic shuttling.

Its subcellular location is the nucleus. It localises to the nucleoplasm. The protein resides in the cytoplasmic granule. The protein localises to the secreted. It is found in the extracellular exosome. Functionally, heterogeneous nuclear ribonucleoprotein (hnRNP) that associates with nascent pre-mRNAs, packaging them into hnRNP particles. The hnRNP particle arrangement on nascent hnRNA is non-random and sequence-dependent and serves to condense and stabilize the transcripts and minimize tangling and knotting. Packaging plays a role in various processes such as transcription, pre-mRNA processing, RNA nuclear export, subcellular location, mRNA translation and stability of mature mRNAs. Forms hnRNP particles with at least 20 other different hnRNP and heterogeneous nuclear RNA in the nucleus. Involved in transport of specific mRNAs to the cytoplasm in oligodendrocytes and neurons: acts by specifically recognizing and binding the A2RE (21 nucleotide hnRNP A2 response element) or the A2RE11 (derivative 11 nucleotide oligonucleotide) sequence motifs present on some mRNAs, and promotes their transport to the cytoplasm. Specifically binds single-stranded telomeric DNA sequences, protecting telomeric DNA repeat against endonuclease digestion. Also binds other RNA molecules, such as primary miRNA (pri-miRNAs): acts as a nuclear 'reader' of the N6-methyladenosine (m6A) mark by specifically recognizing and binding a subset of nuclear m6A-containing pri-miRNAs. Binding to m6A-containing pri-miRNAs promotes pri-miRNA processing by enhancing binding of DGCR8 to pri-miRNA transcripts. Involved in miRNA sorting into exosomes following sumoylation, possibly by binding (m6A)-containing pre-miRNAs. Acts as a regulator of efficiency of mRNA splicing, possibly by binding to m6A-containing pre-mRNAs. Plays a role in the splicing of pyruvate kinase PKM by binding repressively to sequences flanking PKM exon 9, inhibiting exon 9 inclusion and resulting in exon 10 inclusion and production of the PKM M2 isoform. This is Heterogeneous nuclear ribonucleoproteins A2/B1 (HNRNPA2B1) from Pongo abelii (Sumatran orangutan).